The primary structure comprises 1043 residues: DVSSEVEVLKALKSLFEHHKALDEKVRERLRAALERVTTLEEQLAGAHQQVSALQQGAGIRDGVAEEEETVDLGPKRLWKDDTGRVEELQGLLEKQNYELSQARERLVTLSATVTELEEDLGTARRDLIKSEELSGKHQRDLREALAQKEDMEERITTLEKRYLAAQREATSIHDLNDKLENELANKESLHRQCEEKARHLQELLEVAEQKLQQTMRKAETLPEVEAELSQRIAALTKAEERHGNIEEHLRQLEGQLEEKNQELARVRQREKMNEDHNKRLSDTVDRLLSESNERLQLHLKERMAALEEKGRLSEEIEKLRQEVDQLKGRGGPFVDGIHSRSHVGSTTDVRFSLSTAAHVPPGLHRRYTALREESAKDWKPAPLPGVLAATTTPALTVTLRSPMWTRMSLGAWWALRLMSSHLVAILDAQTLAMMLQEQLDAINQEIRMIQEEKESTELRAEEIETRVTSGSMEALNLTQLRKRGSIPTSLTALSLASASPPLSGRSTPKLTSRSAAQDLDRMGVMTLPSDLRKHRRKLLSPVSREENREDKATIKCETSPPSSPRTLRLEKLGHPTLSQEEGKSALEGQDSNPSSSNSSQDSLHKGAKRKGIKSSIGRLFGKKEKGRLIHLSRDATGHVLLTDSELSLQEPMVPAKLGTQAEKDRRLKKKHQLLEDARRKGMPFAQWDGPTVVSWLELWVGMPAWYVAACRANVKSGAIMSALSDTEIQREIGISNALHRLKLRLAIQEMVSLTSPSAPPTSRTSSGNVWVTHEEMETLATSTKTDSEEGSWAQTLAYGDMNHEWIGNEWLPSLGLPQYRSYFMECLVDARMLDHLTKKDLRVHLKMVDSFHRTSLQYGIMCLKRLNYDRKELEKRREESQHEIKDVLVWTNDQVVHWVQSIGLRDYAGNLHESGVHGALLALDENFDHNTLALVLQIPTQNTQARQVMEREFNNLLALGTDRKLDDGEEKVFRRAPSWRKRFRPRDHHSGGMLGTSAETLPAGFRVSTLGPLQPPPAPPNKIMPEAHSHYLYGHMLSAFRD.

Coiled-coil stretches lie at residues 24-332 (EKVR…GRGG) and 426-470 (ILDA…RVTS). The tract at residues 498–617 (SASPPLSGRS…AKRKGIKSSI (120 aa)) is disordered. Ser-500 carries the phosphoserine modification. A compositionally biased stretch (polar residues) spans 505–516 (GRSTPKLTSRSA). The residue at position 541 (Ser-541) is a Phosphoserine. A compositionally biased stretch (basic and acidic residues) spans 544–555 (SREENREDKATI). Positions 590–602 (QDSNPSSSNSSQD) are enriched in low complexity. 3 SAM domains span residues 688–754 (WDGP…MVSL), 803–867 (NHEW…LKRL), and 891–960 (WTND…LLAL). Positions 864–890 (LKRLNYDRKELEKRREESQHEIKDVLV) form a coiled coil.

This sequence belongs to the liprin family. Liprin-alpha subfamily. Forms homodimers and heterodimers with liprins-alpha and liprins-beta. Interacts with the second PTPase domain of PTPRD, PTPRF and PTPRS. Interacts with RIMS1 and RIMS2. Interacts with GIT1 and GIT2. Interacts with GRIP1. Interacts with KIF1A.

The protein resides in the cytoplasm. It localises to the cell surface. Its function is as follows. May regulate the disassembly of focal adhesions. May localize receptor-like tyrosine phosphatases type 2A at specific sites on the plasma membrane, possibly regulating their interaction with the extracellular environment and their association with substrates. This chain is Liprin-alpha-4 (Ppfia4), found in Rattus norvegicus (Rat).